A 410-amino-acid polypeptide reads, in one-letter code: Na(+)-translocating NADH-quinone reductase subunit B (410 aa).

3 helical membrane passes run 56 to 76 (MMIL…YNVG), 119 to 139 (LFGA…GGFW), and 159 to 179 (SILF…ALGI). An FMN phosphoryl threonine modification is found at T232. The next 5 helical transmembrane spans lie at 266–286 (GSIG…IVFA), 293–313 (IIAG…FIGS), 318–338 (MFAM…GMLF), 347–367 (SFTN…CVLI), and 377–397 (GMML…YFVA).

Belongs to the NqrB/RnfD family. Composed of six subunits; NqrA, NqrB, NqrC, NqrD, NqrE and NqrF. It depends on FMN as a cofactor.

It localises to the cell inner membrane. It carries out the reaction a ubiquinone + n Na(+)(in) + NADH + H(+) = a ubiquinol + n Na(+)(out) + NAD(+). Its function is as follows. NQR complex catalyzes the reduction of ubiquinone-1 to ubiquinol by two successive reactions, coupled with the transport of Na(+) ions from the cytoplasm to the periplasm. NqrA to NqrE are probably involved in the second step, the conversion of ubisemiquinone to ubiquinol. The protein is Na(+)-translocating NADH-quinone reductase subunit B of Neisseria meningitidis serogroup A / serotype 4A (strain DSM 15465 / Z2491).